Reading from the N-terminus, the 264-residue chain is JmjC domain-containing protein 8 (264 aa).

The signal sequence occupies residues 1–23; the sequence is MAPASRLLALWALAAVALPGSGA. N-linked (GlcNAc...) asparagine glycosylation is found at Asn130, Asn140, and Asn209. The 134-residue stretch at 131-264 folds into the JmjC domain; that stretch reads DTLYFFGDNN…TSVFISTFLG (134 aa).

Oligomer. Dimer. Interacts with PKM; regulates angiogenesis and metabolism. Post-translationally, N-glycosylated.

The protein resides in the endoplasmic reticulum lumen. The protein localises to the cytoplasm. Functionally, functions as a positive regulator of TNF-induced NF-kappa-B signaling. Regulates angiogenesis and cellular metabolism through interaction with PKM. The protein is JmjC domain-containing protein 8 of Homo sapiens (Human).